The chain runs to 447 residues: Glycerol-3-phosphate acyltransferase ATS11, chloroplastic (447 aa).

Positions 1–21 (MFILSSSSSLPSPLSLSSSRV) are disordered. A chloroplast-targeting transit peptide spans 1 to 48 (MFILSSSSSLPSPLSLSSSRVSLPPPSSSSLNLLPLSPHFQPPNLACS). The short motif at 217-222 (HQTEAD) is the HXXXXD motif element.

Belongs to the GPAT/DAPAT family.

The protein resides in the plastid. Its subcellular location is the chloroplast stroma. It carries out the reaction a fatty acyl-[ACP] + sn-glycerol 3-phosphate = a 1-acyl-sn-glycero-3-phosphate + holo-[ACP]. It catalyses the reaction sn-glycerol 3-phosphate + an acyl-CoA = a 1-acyl-sn-glycero-3-phosphate + CoA. It functions in the pathway phospholipid metabolism; CDP-diacylglycerol biosynthesis; CDP-diacylglycerol from sn-glycerol 3-phosphate: step 1/3. Its function is as follows. Esterifies the acyl-group from acyl-acyl carrier proteins (acyl-ACPs) to the sn-1 position of glycerol-3-phosphate. The physiological acyl donors in chloroplasts are acyl-ACPs, but acyl-CoAs are used as artificial donor for in vitro reactions. The enzyme from chilling-resistant plants discriminates against non-fluid palmitic acid and selects oleic acid whereas the enzyme from sensitive plants accepts both fatty acids. Squash is chilling-sensitive. Preferably utilizes oleoyl groups (18:1-ACP) and has lower affinity to palmitoyl (16:0-ACP) and stearoyl groups (18:0-ACP). The chain is Glycerol-3-phosphate acyltransferase ATS11, chloroplastic from Cucurbita moschata (Winter crookneck squash).